Consider the following 201-residue polypeptide: Natural cytotoxicity triggering receptor 3 (201 aa).

The first 18 residues, 1–18, serve as a signal peptide directing secretion; sequence MAWMLLLILIMVHPGSCA. The 108-residue stretch at 19 to 126 folds into the Ig-like domain; sequence LWVSQPPEIR…VGTGNGTRLV (108 aa). Over 19 to 135 the chain is Extracellular; sequence LWVSQPPEIR…VVEKEHPQLG (117 aa). Cysteines 39 and 108 form a disulfide. N-linked (GlcNAc...) asparagine glycans are attached at residues Asn42 and Asn121. Residues 136-156 traverse the membrane as a helical segment; the sequence is AGTVLLLRAGFYAVSFLSVAV. The Cytoplasmic segment spans residues 157-201; that stretch reads GSTVYYQGKCLTWKGPRRQLPAVVPAPLPPPCGSSAHLLPPVPGG.

It belongs to the natural cytotoxicity receptor (NCR) family. In terms of assembly, homodimer in the unliganted form. Interacts with CD3Z. Interacts with and is activated by binding to NCR3LG1. Interacts with and is activated by binding to BAG6. Interacts with and is inhibited by binding to LGALS3. In terms of tissue distribution, selectively expressed by all resting and activated NK cells and weakly expressed in spleen.

It is found in the cell membrane. Its function is as follows. Cell membrane receptor of natural killer/NK cells that is activated by binding of extracellular ligands including BAG6 and NCR3LG1. Stimulates NK cells cytotoxicity toward neighboring cells producing these ligands. It controls, for instance, NK cells cytotoxicity against tumor cells. Engagement of NCR3 by BAG6 also promotes myeloid dendritic cells (DC) maturation, both through killing DCs that did not acquire a mature phenotype, and inducing the release by NK cells of TNFA and IFNG which promote DC maturation. The protein is Natural cytotoxicity triggering receptor 3 of Homo sapiens (Human).